The primary structure comprises 219 residues: UPF0173 metal-dependent hydrolase LSL_0324 (219 aa).

It belongs to the UPF0173 family.

The polypeptide is UPF0173 metal-dependent hydrolase LSL_0324 (Ligilactobacillus salivarius (strain UCC118) (Lactobacillus salivarius)).